The chain runs to 210 residues: Large ribosomal subunit protein uL3 (210 aa).

Positions 123-144 (KRHGQSRGPMAHGSRYHRRPGS) are disordered.

It belongs to the universal ribosomal protein uL3 family. As to quaternary structure, part of the 50S ribosomal subunit. Forms a cluster with proteins L14 and L19.

Its function is as follows. One of the primary rRNA binding proteins, it binds directly near the 3'-end of the 23S rRNA, where it nucleates assembly of the 50S subunit. This Alkaliphilus metalliredigens (strain QYMF) protein is Large ribosomal subunit protein uL3.